We begin with the raw amino-acid sequence, 513 residues long: MAVITEENSNNLFCTDSLELTSNKQDDQVISNYLKPVRSYPYIKYSRSSLLLTASTTLPENFVISFTNSIESEESDKSDYLLDHAHSLQELSTTHSSLSSTLTSMSEESSSTESKFATLNDGINGGNPYSRLYRKNPSSDPNDIPPQFHFKKKSKSFYSSMYDKMKIRINILPNGNDNFIKKRNSGFALAPIACYNHTSDLRKLLKHKVTGSNASIFKRINPRSRKRVVNPECSVTDTPYGKLNNVIGEGASSFIRVINDRNKLPIYVAKVFRPPLDTSLLRRYVRYFIAEYTFASTLRHPNIIKVLDIIYKRHTILQIIEYVPYDLFTFITKGHCSALKADQMFFQLLDGVAYMHSLGIAHRDIKLDNIMLDENLNVKIIDFGTAFVFHYPFESTTLMSDGVVGSKPYVAPEVLTQKPYDPSAVDVWSCAIVYCCIALKRFPWKVPHTSDKRFNLYVTQRNDPNTKSQLIESLPMNSRDTIYHMLDIDFNTRCSISGARSTTWMQQVRKTLI.

The segment covering 98–114 (LSSTLTSMSEESSSTES) has biased composition (low complexity). A disordered region spans residues 98-120 (LSSTLTSMSEESSSTESKFATLN). A Protein kinase domain is found at 241–505 (GKLNNVIGEG…ISGARSTTWM (265 aa)). ATP is bound by residues 247-255 (IGEGASSFI) and lysine 270. Aspartate 364 functions as the Proton acceptor in the catalytic mechanism.

This sequence belongs to the protein kinase superfamily. Ser/Thr protein kinase family.

The protein resides in the cytoplasm. The protein localises to the nucleus. The catalysed reaction is L-seryl-[protein] + ATP = O-phospho-L-seryl-[protein] + ADP + H(+). It carries out the reaction L-threonyl-[protein] + ATP = O-phospho-L-threonyl-[protein] + ADP + H(+). This is Serine/threonine-protein kinase ppk8 (ppk8) from Schizosaccharomyces pombe (strain 972 / ATCC 24843) (Fission yeast).